Consider the following 139-residue polypeptide: Probable transcription termination protein NusA (139 aa).

Positions 97 to 139 (STVAYAEVDRADTGVAIGRDGETIETARRLAERQFDIDDIELA) constitute a KH domain.

Belongs to the NusA family.

The protein resides in the cytoplasm. Functionally, participates in transcription termination. This chain is Probable transcription termination protein NusA, found in Halococcus morrhuae (Micrococcus morrhuae).